An 888-amino-acid polypeptide reads, in one-letter code: MIITSPLLDYVTSHQDIKAINQWRADVEQQLQEFYENGYSIRDIVLARSNLIDEALTFLWKHAGLDQSDLGLFAVGGYGRREMLPYSDVDIMILSENDISPEHEKQISGFISSLWDVGNFKPGTSVRSIQNCVEQATNDLTVATTLIESRLITGNPDLAKWPRRIVSQTWTDKTFFDAKMEEQAKRHAQHNNTESNLEPDIKNAPGGIRDMNQIGWIAKRHFRVNRIYDLVHLGFITEYELKVLEEAESFLWEIRHHLHLLSKRDENRLLFDHQREIAAKFGYTRAEGQPVNFAVEQFMKRYYRTAQQVSTLNEMLLAYFNESVITPRLPNYERKIEEINENFKLVDGKLAVQHHKVFSENPSAILELFYLLANHPEIEGIRARTLRLLIMAAKRIDQEFRDNPAHQALFMAIIRSPYRLYDTLVDMKRYGILGNYIPAFGQIMGLMQYDLFHIYTVDAHTLLLIRNLNRFKEPEFAQHFPVVSSVFQRLARRDIVYLAAIFHDIAKGRGGDHSELGAEDAIEFCRAHGFTERECKLVAWLIHNHLLMSLTAQKKDISDPDVIKEFAEKLGDMEHLDYLYTLTVADINATNPKLWNTWRASLMRQLYTYSRDVIRSGLGRPVDYQMLIEDTKFSASETLVNEFSLDAVEKVWQELGDEYFLKESADEIAWHTRAILQHGDNPAPIVLLRAHRQSAQDAVQIFIYTQDKPNLFATTVAVLDRMNLDVQDARIITATKAFSLDTYVVLDRFGTLLTDPEREHTVKEALIKALSQSDKYPGLMQRRIPRQLRHFDIENTVDITLNPVLQQNMVEISTLDQPGLLARVGGLFMMQGLDIHSAKIATLGERAEDIFFVTKKDGQPMTTDEAHIFSAQLKLALDEASNQIVSQH.

Residues 1-338 (MIITSPLLDY…LPNYERKIEE (338 aa)) form a uridylyltransferase region. Residues 182-204 (EQAKRHAQHNNTESNLEPDIKNA) are disordered. Residues 339 to 699 (INENFKLVDG…AHRQSAQDAV (361 aa)) form a uridylyl-removing region. Positions 457–579 (VDAHTLLLIR…LGDMEHLDYL (123 aa)) constitute an HD domain. ACT domains follow at residues 700–781 (QIFI…GLMQ) and 809–887 (MVEI…IVSQ).

It belongs to the GlnD family. The cofactor is Mg(2+).

It catalyses the reaction [protein-PII]-L-tyrosine + UTP = [protein-PII]-uridylyl-L-tyrosine + diphosphate. The enzyme catalyses [protein-PII]-uridylyl-L-tyrosine + H2O = [protein-PII]-L-tyrosine + UMP + H(+). Uridylyltransferase (UTase) activity is inhibited by glutamine, while glutamine activates uridylyl-removing (UR) activity. Functionally, modifies, by uridylylation and deuridylylation, the PII regulatory proteins (GlnB and homologs), in response to the nitrogen status of the cell that GlnD senses through the glutamine level. Under low glutamine levels, catalyzes the conversion of the PII proteins and UTP to PII-UMP and PPi, while under higher glutamine levels, GlnD hydrolyzes PII-UMP to PII and UMP (deuridylylation). Thus, controls uridylylation state and activity of the PII proteins, and plays an important role in the regulation of nitrogen assimilation and metabolism. The polypeptide is Bifunctional uridylyltransferase/uridylyl-removing enzyme (Acinetobacter baylyi (strain ATCC 33305 / BD413 / ADP1)).